Consider the following 305-residue polypeptide: Protoheme IX farnesyltransferase (305 aa).

9 helical membrane passes run 31-51 (VMSL…YSVH), 52-72 (PFIA…AGAI), 96-118 (VIES…FFMA), 122-144 (NLLA…TIWL), 151-171 (NIVI…AAVS), 180-200 (ILFL…ALFC), 225-245 (ILIY…IGMN), 247-267 (FIYL…AGSL), and 281-301 (FAYS…TNTI).

Belongs to the UbiA prenyltransferase family. Protoheme IX farnesyltransferase subfamily.

The protein resides in the cell inner membrane. It carries out the reaction heme b + (2E,6E)-farnesyl diphosphate + H2O = Fe(II)-heme o + diphosphate. The protein operates within porphyrin-containing compound metabolism; heme O biosynthesis; heme O from protoheme: step 1/1. Its function is as follows. Converts heme B (protoheme IX) to heme O by substitution of the vinyl group on carbon 2 of heme B porphyrin ring with a hydroxyethyl farnesyl side group. The sequence is that of Protoheme IX farnesyltransferase from Rickettsia peacockii (strain Rustic).